The primary structure comprises 109 residues: DNA-directed RNA polymerase subunit I (109 aa).

It carries out the reaction RNA(n) + a ribonucleoside 5'-triphosphate = RNA(n+1) + diphosphate. In terms of biological role, DNA-dependent RNA polymerase catalyzes the transcription of DNA into RNA using the four ribonucleoside triphosphates as substrates. The sequence is that of DNA-directed RNA polymerase subunit I (rpoI) from Methanocaldococcus jannaschii (strain ATCC 43067 / DSM 2661 / JAL-1 / JCM 10045 / NBRC 100440) (Methanococcus jannaschii).